We begin with the raw amino-acid sequence, 120 residues long: MSNKNEALLRRKARVRRALRAAANGRPRLSVFRSSKQIYVQVIDDAAGRTLAAASSLDKDLKSSLKTGADKAAAEAVGKLVAERAKAAGVTKVVFDRSGYIFHGRVKALADAAREGGLDF.

Belongs to the universal ribosomal protein uL18 family. In terms of assembly, part of the 50S ribosomal subunit; part of the 5S rRNA/L5/L18/L25 subcomplex. Contacts the 5S and 23S rRNAs.

Functionally, this is one of the proteins that bind and probably mediate the attachment of the 5S RNA into the large ribosomal subunit, where it forms part of the central protuberance. This is Large ribosomal subunit protein uL18 from Methylorubrum extorquens (strain CM4 / NCIMB 13688) (Methylobacterium extorquens).